A 90-amino-acid chain; its full sequence is Sakacin-A immunity factor (90 aa).

Its function is as follows. Imparts immunity to sakacin-A to naturally sensitive host strains. This Latilactobacillus sakei (Lactobacillus sakei) protein is Sakacin-A immunity factor (saiA).